The primary structure comprises 606 residues: Aspartate--tRNA(Asp/Asn) ligase (606 aa).

E177 contributes to the L-aspartate binding site. Residues 201–204 are aspartate; it reads QLFK. R223 contributes to the L-aspartate binding site. Residues 223 to 225 and Q232 each bind ATP; that span reads RDE. H461 contributes to the L-aspartate binding site. Residue E499 coordinates ATP. Residue R506 participates in L-aspartate binding. 551-554 contributes to the ATP binding site; that stretch reads GMDR.

It belongs to the class-II aminoacyl-tRNA synthetase family. Type 1 subfamily. In terms of assembly, homodimer.

The protein resides in the cytoplasm. It catalyses the reaction tRNA(Asx) + L-aspartate + ATP = L-aspartyl-tRNA(Asx) + AMP + diphosphate. Functionally, aspartyl-tRNA synthetase with relaxed tRNA specificity since it is able to aspartylate not only its cognate tRNA(Asp) but also tRNA(Asn). Reaction proceeds in two steps: L-aspartate is first activated by ATP to form Asp-AMP and then transferred to the acceptor end of tRNA(Asp/Asn). The chain is Aspartate--tRNA(Asp/Asn) ligase from Prochlorococcus marinus (strain MIT 9313).